The chain runs to 609 residues: tRNA uridine 5-carboxymethylaminomethyl modification enzyme MnmG (609 aa).

FAD contacts are provided by residues 11–16, Val-123, and Thr-178; that span reads GAGHAG. Position 270 to 284 (270 to 284) interacts with NAD(+); it reads GPRYCPSIEDKVVRF. Gln-367 contributes to the FAD binding site.

This sequence belongs to the MnmG family. Homodimer. Heterotetramer of two MnmE and two MnmG subunits. Requires FAD as cofactor.

It localises to the cytoplasm. Functionally, NAD-binding protein involved in the addition of a carboxymethylaminomethyl (cmnm) group at the wobble position (U34) of certain tRNAs, forming tRNA-cmnm(5)s(2)U34. This Mycoplasmopsis synoviae (strain 53) (Mycoplasma synoviae) protein is tRNA uridine 5-carboxymethylaminomethyl modification enzyme MnmG.